A 428-amino-acid polypeptide reads, in one-letter code: MARGLFSRAWLSKTHHFQARLSYIRVKYLFLTWLAVFVSSWVVYVQYSTYTELCRGRECKSIICDKYSKGIIDGSACSSLCEESKLYFGRCLSTKPNNQVYTGSWGDQDGVIKCQLSDVLHYELGEELEPKKEITLFEKPTRGTSVEKFKEMVASHLKAKVGEQANLSNLVSLILSVADSNKDGHISLPEAKSAWALLQLNEVLLAVVLQGREHTPKLLGFCGDLYVVERVPHAPLFGITLPWPMDLWIPAGMRRSMDQWFTPSWPRKAKIFIGLLELIEDIFHGTFGSFLMCDMRASSFGYTDRHDLRLVDGRRVVAEEAFKQAMILQRCKDHEDCVYGADCRTSCDLSEQRCTAEVAQPNLARACGAMKDYLLRGAPFHLQEELEKQLYACMALKGSAEQMEMEHSLILNNLKTLLWKQISHTTDS.

Residues 1–27 lie on the Cytoplasmic side of the membrane; the sequence is MARGLFSRAWLSKTHHFQARLSYIRVK. The helical transmembrane segment at 28 to 48 threads the bilayer; sequence YLFLTWLAVFVSSWVVYVQYS. Residues 49–428 lie on the Lumenal side of the membrane; that stretch reads TYTELCRGRE…WKQISHTTDS (380 aa).

The protein belongs to the DIPK family. Among the many cysteines in the lumenal domain, most are probably involved in disulfide bonds.

It is found in the endoplasmic reticulum membrane. This Danio rerio (Zebrafish) protein is Divergent protein kinase domain 1A (dipk1a).